A 339-amino-acid chain; its full sequence is MVREEVAGSTQTLQWKCVESRVDSKRLYYGRFILSPLRKGQADTVGIALRRALLGEIEGTCITRAKFGSVPHEYSTIAGIEESVQEILLNLKEIVLRSNLYGVRDASICVKGPRYITAQDIILPPSVEIVDTAQPIANLTEPIDFCIDLQIKRDRGYQTELRKNYQDGSYPIDAVSMPVRNVNYSIFSCGNGNEKHEILFLEIWTNGSLTPKEALYEASRNLIDLFLPFLHAEEEGTSFEENKNRFTPPLFTFQKRLTNLKKNKKGIPLNSIFIDQLELTSRTYNCLKRANIHTLLDLLSKTEEDLLRIDSFRMEDRKHIWDTLEKHLPIDLLKNKLSF.

The segment at 1–233 (MVREEVAGST…DLFLPFLHAE (233 aa)) is alpha N-terminal domain (alpha-NTD). The interval 264 to 339 (KKGIPLNSIF…IDLLKNKLSF (76 aa)) is alpha C-terminal domain (alpha-CTD).

The protein belongs to the RNA polymerase alpha chain family. In plastids the minimal PEP RNA polymerase catalytic core is composed of four subunits: alpha, beta, beta', and beta''. When a (nuclear-encoded) sigma factor is associated with the core the holoenzyme is formed, which can initiate transcription.

Its subcellular location is the plastid. It is found in the chloroplast. It catalyses the reaction RNA(n) + a ribonucleoside 5'-triphosphate = RNA(n+1) + diphosphate. Functionally, DNA-dependent RNA polymerase catalyzes the transcription of DNA into RNA using the four ribonucleoside triphosphates as substrates. The sequence is that of DNA-directed RNA polymerase subunit alpha from Aegilops tauschii (Tausch's goatgrass).